We begin with the raw amino-acid sequence, 110 residues long: UPF0235 protein Mpop_2087 (110 aa).

Belongs to the UPF0235 family.

The chain is UPF0235 protein Mpop_2087 from Methylorubrum populi (strain ATCC BAA-705 / NCIMB 13946 / BJ001) (Methylobacterium populi).